Consider the following 254-residue polypeptide: Alcohol dehydrogenase (254 aa).

10–33 (FVAGLGGIGLDTSREIVKSGPKNL) serves as a coordination point for NAD(+). S138 contributes to the substrate binding site. Y151 serves as the catalytic Proton acceptor.

Belongs to the short-chain dehydrogenases/reductases (SDR) family. In terms of assembly, homodimer.

The enzyme catalyses a primary alcohol + NAD(+) = an aldehyde + NADH + H(+). It catalyses the reaction a secondary alcohol + NAD(+) = a ketone + NADH + H(+). The sequence is that of Alcohol dehydrogenase (Adh1) from Drosophila lacicola (Fruit fly).